The primary structure comprises 598 residues: uncharacterized protein (598 aa).

A compositionally biased stretch (basic and acidic residues) spans 1–23 (MSHEGSRQARDRGVTRSKAEKAR). 3 disordered regions span residues 1–32 (MSHE…VPQV), 151–190 (FHNE…VTPR), and 222–241 (PSKE…SPQS). Positions 225 to 235 (ESLRSTAEGER) are enriched in basic and acidic residues. Ser238 and Ser242 each carry phosphoserine. 2 disordered regions span residues 366–396 (RRSQ…SSPR) and 551–571 (AEEG…VSKP). 2 stretches are compositionally biased toward polar residues: residues 369-386 (QAGT…SSRA) and 558-569 (APEQQPIQTGVS).

This is an uncharacterized protein from Mus musculus (Mouse).